Here is a 190-residue protein sequence, read N- to C-terminus: LIM domain-containing protein WLIM1 (190 aa).

Ala2 is subject to N-acetylalanine. In terms of domain architecture, LIM zinc-binding 1 spans 8–68 (QKCMACDKTV…RPHFDQNFKR (61 aa)). A disordered region spans residues 74-98 (KSFEGTPKIGKPDRPLEGERPAGTK). Residues 83 to 95 (GKPDRPLEGERPA) show a composition bias toward basic and acidic residues. The LIM zinc-binding 2 domain maps to 108–168 (EKCVGCDKTV…KHHHIQLIKE (61 aa)).

Interacts with F-actin. Expressed in roots, leaves, stems, flowers and siliques. Not detected in pollen.

It is found in the cytoplasm. The protein resides in the cytoskeleton. Functionally, binds to actin filaments and promotes cross-linking into thick bundles. Has an actin-stabilizing activity. The actin regulatory activities are not regulated by pH and [Ca(2+)]. This chain is LIM domain-containing protein WLIM1, found in Arabidopsis thaliana (Mouse-ear cress).